Here is a 697-residue protein sequence, read N- to C-terminus: MAVMNGGRATKRARRSNRISADLYDFSTFPTAEINGESTTLPPFRDGVRTFLATHARVTFPPSTLFSSLMTWQIMLRPGDSTDGSDLSSKLVSLDVVEEDVTRSSRSVYCEHCCVVGWSSHPVCRKRYRFIIRSGGDTKACTRCGNTQNLSEGSNCKWCSMALDIENWVYSQLEDNTHLLHGVIHSNGYAHLLCLNGREGGSGFLTGRAIMDFWDRLCSSLAVRKASVMDVSRKYGMDYRLLHGITRGCSWYSEWGYEFKSGSYALTKEAYQSAVDTLSAIPLSEFLFQGRKPRTQLHSIISFYQSLSCSELVTVKDLFSFLLQMIRENSSKPASKSSVLCAWSKSDVERVQQTMVKILKASGRPQANWVTRWALKRSICKSASPQLIDYCLKHFGGVLVDDGSRVVSSRCNPGSNDFEYRLESVNNVHRLSNQDVNNASVEHVKQDLRYLYETLLHPQTMAEFRSRATREKMIDAATKILDCKHFIKDYLSSTVNPVAINLWCCVELSDELKESPAPPPERLVLPLNATVSDLKIEAAKAFQEVYAMFKRFEVEELLGYGSIDDSITLKFLVGTNGVIRIKGRCSKHGLLRYRMERGVDNWKVDCKCGTKDDDGERMLACDGCGVWHHTRCIGINNADALPSKFLCFRCIELYSKKPKQSKKERGSSQVPKAGFVCRGESAAMGSGSNLSVTLRVG.

The PHD-type zinc finger occupies 603–653 (KVDCKCGTKDDDGERMLACDGCGVWHHTRCIGINNADALPSKFLCFRCIEL).

It is found in the nucleus. In Arabidopsis thaliana (Mouse-ear cress), this protein is PHD finger protein At1g33420.